The sequence spans 175 residues: Hypoxanthine-guanine phosphoribosyltransferase (175 aa).

2 residues coordinate diphosphate: K40 and G41. Residues E96 and D97 each contribute to the Mg(2+) site. D100 acts as the Proton acceptor in catalysis. Residues K128, 149–150, and D156 contribute to the GMP site; that span reads FL. R162 is a binding site for diphosphate.

The protein belongs to the purine/pyrimidine phosphoribosyltransferase family. Mg(2+) serves as cofactor.

The protein localises to the cytoplasm. The catalysed reaction is IMP + diphosphate = hypoxanthine + 5-phospho-alpha-D-ribose 1-diphosphate. The enzyme catalyses GMP + diphosphate = guanine + 5-phospho-alpha-D-ribose 1-diphosphate. It functions in the pathway purine metabolism; IMP biosynthesis via salvage pathway; IMP from hypoxanthine: step 1/1. Its pathway is purine metabolism; GMP biosynthesis via salvage pathway; GMP from guanine: step 1/1. Functionally, purine salvage pathway enzyme that catalyzes the transfer of the ribosyl-5-phosphate group from 5-phospho-alpha-D-ribose 1-diphosphate (PRPP) to the N9 position of the 6-oxopurines hypoxanthine and guanine to form the corresponding ribonucleotides IMP (inosine 5'-monophosphate) and GMP (guanosine 5'-monophosphate), with the release of PPi. This chain is Hypoxanthine-guanine phosphoribosyltransferase (hpt), found in Mycoplasma pneumoniae (strain ATCC 29342 / M129 / Subtype 1) (Mycoplasmoides pneumoniae).